The chain runs to 303 residues: tRNA dimethylallyltransferase (303 aa).

Position 12–19 (Gly12–Ser19) interacts with ATP. Thr14 to Ser19 contributes to the substrate binding site. The tract at residues Asp37–Gln40 is interaction with substrate tRNA.

Belongs to the IPP transferase family. Monomer. It depends on Mg(2+) as a cofactor.

The catalysed reaction is adenosine(37) in tRNA + dimethylallyl diphosphate = N(6)-dimethylallyladenosine(37) in tRNA + diphosphate. Functionally, catalyzes the transfer of a dimethylallyl group onto the adenine at position 37 in tRNAs that read codons beginning with uridine, leading to the formation of N6-(dimethylallyl)adenosine (i(6)A). In Synechocystis sp. (strain ATCC 27184 / PCC 6803 / Kazusa), this protein is tRNA dimethylallyltransferase.